Reading from the N-terminus, the 154-residue chain is Prefoldin subunit 2 (154 aa).

Disordered stretches follow at residues 1–20 (MADSSGRVGKSGGSGTGKGA) and 126–154 (LMGEDEKPAAKENSEGAGAKSSSAGVLVS). A compositionally biased stretch (gly residues) spans 9-18 (GKSGGSGTGK). Positions 126-139 (LMGEDEKPAAKENS) are enriched in basic and acidic residues. A compositionally biased stretch (low complexity) spans 141–154 (GAGAKSSSAGVLVS).

This sequence belongs to the prefoldin subunit beta family. Heterohexamer of two PFD-alpha type and four PFD-beta type subunits. Component of the PAQosome complex which is responsible for the biogenesis of several protein complexes and which consists of R2TP complex members RUVBL1, RUVBL2, RPAP3 and PIH1D1, URI complex members PFDN2, PFDN6, PDRG1, UXT and URI1 as well as ASDURF, POLR2E and DNAAF10/WDR92. Interacts with URI1; the interaction is phosphorylation-dependent and occurs in a growth-dependent manner.

The protein localises to the nucleus. Its subcellular location is the cytoplasm. It is found in the mitochondrion. Functionally, binds specifically to cytosolic chaperonin (c-CPN) and transfers target proteins to it. Binds to nascent polypeptide chain and promotes folding in an environment in which there are many competing pathways for nonnative proteins. The protein is Prefoldin subunit 2 (Pfdn2) of Rattus norvegicus (Rat).